The following is a 141-amino-acid chain: Cystatin (141 aa).

The signal sequence occupies residues 1-26 (MVHSQLPVAAPLRLLCALLLLPSATM). The region spanning 29 to 129 (GGLSPRSVTD…CHFQVWSRPW (101 aa)) is the Cystatin domain. The Secondary area of contact motif lies at 73–77 (QVVAG). Intrachain disulfides connect C91–C107 and C120–C140.

It belongs to the cystatin family. In terms of tissue distribution, expressed at a low level by the venom gland (at protein level).

The protein localises to the secreted. In terms of biological role, inhibits various C1 cysteine proteases including cathepsin L, papain and cathepsin B. This protein has no toxic activity and its function in the venom is unknown. It may play a role as a housekeeping or regulatory protein. The sequence is that of Cystatin from Oxyuranus scutellatus scutellatus (Australian taipan).